The sequence spans 359 residues: Protein RecA (359 aa).

Position 77 to 84 (77 to 84 (GPESSGKT)) interacts with ATP.

It belongs to the RecA family.

The protein resides in the cytoplasm. Its function is as follows. Can catalyze the hydrolysis of ATP in the presence of single-stranded DNA, the ATP-dependent uptake of single-stranded DNA by duplex DNA, and the ATP-dependent hybridization of homologous single-stranded DNAs. It interacts with LexA causing its activation and leading to its autocatalytic cleavage. This is Protein RecA from Azospirillum lipoferum (strain 4B).